Here is a 322-residue protein sequence, read N- to C-terminus: Succinate/fumarate mitochondrial transporter (322 aa).

Solcar repeat units lie at residues 8 to 99 (SHPA…YRTL), 111 to 202 (GNTF…LKEF), and 212 to 303 (LPSW…VREH). A run of 6 helical transmembrane segments spans residues 11–31 (AINLMAGGTAGLFEALCCHPL), 68–88 (FLALYKGLGAVVIGIIPKMAI), 114–134 (FVAGVGAGITEAVLVVNPMEV), 177–193 (GVSLTAARQATNQGANF), 219–235 (CIGLISGAIGPFSNAPL), and 278–295 (GITPRVMRVAPGQAVTFT).

The protein belongs to the mitochondrial carrier (TC 2.A.29) family.

It is found in the mitochondrion inner membrane. In terms of biological role, transports cytoplasmic succinate, derived from isocitrate by the action of isocitrate lyase in the cytosol, into the mitochondrial matrix in exchange for fumarate. This Saccharomyces cerevisiae (strain ATCC 204508 / S288c) (Baker's yeast) protein is Succinate/fumarate mitochondrial transporter (SFC1).